Reading from the N-terminus, the 215-residue chain is Probable septum site-determining protein MinC (215 aa).

Belongs to the MinC family. As to quaternary structure, interacts with MinD and FtsZ.

In terms of biological role, cell division inhibitor that blocks the formation of polar Z ring septums. Rapidly oscillates between the poles of the cell to destabilize FtsZ filaments that have formed before they mature into polar Z rings. Prevents FtsZ polymerization. In Clostridium botulinum (strain Alaska E43 / Type E3), this protein is Probable septum site-determining protein MinC.